A 197-amino-acid polypeptide reads, in one-letter code: Imidazoleglycerol-phosphate dehydratase (197 aa).

Belongs to the imidazoleglycerol-phosphate dehydratase family.

It is found in the cytoplasm. It catalyses the reaction D-erythro-1-(imidazol-4-yl)glycerol 3-phosphate = 3-(imidazol-4-yl)-2-oxopropyl phosphate + H2O. It functions in the pathway amino-acid biosynthesis; L-histidine biosynthesis; L-histidine from 5-phospho-alpha-D-ribose 1-diphosphate: step 6/9. This Nitrobacter hamburgensis (strain DSM 10229 / NCIMB 13809 / X14) protein is Imidazoleglycerol-phosphate dehydratase.